The primary structure comprises 81 residues: Photosystem I iron-sulfur center (81 aa).

2 4Fe-4S ferredoxin-type domains span residues 2-31 (SHSV…MVPW) and 37-68 (GQIA…VRVY). Residues Cys-11, Cys-14, Cys-17, Cys-21, Cys-48, Cys-51, Cys-54, and Cys-58 each coordinate [4Fe-4S] cluster.

The eukaryotic PSI reaction center is composed of at least 11 subunits. [4Fe-4S] cluster serves as cofactor.

The protein resides in the plastid. Its subcellular location is the chloroplast thylakoid membrane. It catalyses the reaction reduced [plastocyanin] + hnu + oxidized [2Fe-2S]-[ferredoxin] = oxidized [plastocyanin] + reduced [2Fe-2S]-[ferredoxin]. Apoprotein for the two 4Fe-4S centers FA and FB of photosystem I (PSI); essential for photochemical activity. FB is the terminal electron acceptor of PSI, donating electrons to ferredoxin. The C-terminus interacts with PsaA/B/D and helps assemble the protein into the PSI complex. Required for binding of PsaD and PsaE to PSI. PSI is a plastocyanin/cytochrome c6-ferredoxin oxidoreductase, converting photonic excitation into a charge separation, which transfers an electron from the donor P700 chlorophyll pair to the spectroscopically characterized acceptors A0, A1, FX, FA and FB in turn. This is Photosystem I iron-sulfur center from Euglena gracilis.